Here is a 250-residue protein sequence, read N- to C-terminus: NADH-quinone oxidoreductase subunit C (250 aa).

Residues glycine 193 to alanine 250 are disordered. Over residues glycine 222–proline 236 the composition is skewed to low complexity. The segment covering alanine 241–alanine 250 has biased composition (acidic residues).

The protein belongs to the complex I 30 kDa subunit family. As to quaternary structure, NDH-1 is composed of 14 different subunits. Subunits NuoB, C, D, E, F, and G constitute the peripheral sector of the complex.

The protein localises to the cell inner membrane. The catalysed reaction is a quinone + NADH + 5 H(+)(in) = a quinol + NAD(+) + 4 H(+)(out). In terms of biological role, NDH-1 shuttles electrons from NADH, via FMN and iron-sulfur (Fe-S) centers, to quinones in the respiratory chain. The immediate electron acceptor for the enzyme in this species is believed to be ubiquinone. Couples the redox reaction to proton translocation (for every two electrons transferred, four hydrogen ions are translocated across the cytoplasmic membrane), and thus conserves the redox energy in a proton gradient. This Erythrobacter litoralis (strain HTCC2594) protein is NADH-quinone oxidoreductase subunit C.